The following is a 130-amino-acid chain: Peptidyl-prolyl cis-trans isomerase pin4 (130 aa).

The segment at 1 to 38 (MGKDKKASGSGSGSKGGKDAGNKDAGKDAGKASKGAQS) is disordered. Residues 16-31 (GGKDAGNKDAGKDAGK) are compositionally biased toward basic and acidic residues. The 93-residue stretch at 36-128 (AQSINVRHIL…FGYHIIMVEG (93 aa)) folds into the PpiC domain.

This sequence belongs to the PpiC/parvulin rotamase family. PIN4 subfamily.

It carries out the reaction [protein]-peptidylproline (omega=180) = [protein]-peptidylproline (omega=0). Functionally, PPIases accelerate the folding of proteins. It catalyzes the cis-trans isomerization of proline imidic peptide bonds in oligopeptides. The chain is Peptidyl-prolyl cis-trans isomerase pin4 (ppi-5) from Neurospora crassa (strain ATCC 24698 / 74-OR23-1A / CBS 708.71 / DSM 1257 / FGSC 987).